Consider the following 78-residue polypeptide: D-alanyl carrier protein (78 aa).

Residues 1–78 (MEFRDQVLDL…KIVAVLEELR (78 aa)) enclose the Carrier domain. Serine 36 bears the O-(pantetheine 4'-phosphoryl)serine mark.

This sequence belongs to the DltC family. In terms of processing, 4'-phosphopantetheine is transferred from CoA to a specific serine of apo-DCP.

It is found in the cytoplasm. It functions in the pathway cell wall biogenesis; lipoteichoic acid biosynthesis. Carrier protein involved in the D-alanylation of lipoteichoic acid (LTA). The loading of thioester-linked D-alanine onto DltC is catalyzed by D-alanine--D-alanyl carrier protein ligase DltA. The DltC-carried D-alanyl group is further transferred to cell membrane phosphatidylglycerol (PG) by forming an ester bond, probably catalyzed by DltD. D-alanylation of LTA plays an important role in modulating the properties of the cell wall in Gram-positive bacteria, influencing the net charge of the cell wall. This chain is D-alanyl carrier protein, found in Staphylococcus saprophyticus subsp. saprophyticus (strain ATCC 15305 / DSM 20229 / NCIMB 8711 / NCTC 7292 / S-41).